The chain runs to 583 residues: 2-succinyl-5-enolpyruvyl-6-hydroxy-3-cyclohexene-1-carboxylate synthase (583 aa).

The protein belongs to the TPP enzyme family. MenD subfamily. Homodimer. It depends on Mg(2+) as a cofactor. Requires Mn(2+) as cofactor. Thiamine diphosphate is required as a cofactor.

It catalyses the reaction isochorismate + 2-oxoglutarate + H(+) = 5-enolpyruvoyl-6-hydroxy-2-succinyl-cyclohex-3-ene-1-carboxylate + CO2. It participates in quinol/quinone metabolism; 1,4-dihydroxy-2-naphthoate biosynthesis; 1,4-dihydroxy-2-naphthoate from chorismate: step 2/7. It functions in the pathway quinol/quinone metabolism; menaquinone biosynthesis. Catalyzes the thiamine diphosphate-dependent decarboxylation of 2-oxoglutarate and the subsequent addition of the resulting succinic semialdehyde-thiamine pyrophosphate anion to isochorismate to yield 2-succinyl-5-enolpyruvyl-6-hydroxy-3-cyclohexene-1-carboxylate (SEPHCHC). The polypeptide is 2-succinyl-5-enolpyruvyl-6-hydroxy-3-cyclohexene-1-carboxylate synthase (Roseiflexus sp. (strain RS-1)).